The chain runs to 396 residues: Purine ribonucleoside efflux pump NepI (396 aa).

The Cytoplasmic portion of the chain corresponds to 1-21; the sequence is MSEFIAENRGADAITRPNWSA. Residues 22–42 form a helical membrane-spanning segment; it reads VFSVAFCVACLIIVEFLPVSL. The Periplasmic portion of the chain corresponds to 43–54; that stretch reads LTPMAQDLGISE. The helical transmembrane segment at 55-75 threads the bilayer; it reads GVAGQSVTVTAFVAMFASLFI. Over 76–85 the chain is Cytoplasmic; the sequence is TQTIQATDRR. Residues 86–106 form a helical membrane-spanning segment; that stretch reads YVVILFAVLLTLSCLLVSFAN. Position 107 (S107) is a topological domain, periplasmic. Residues 108–128 traverse the membrane as a helical segment; sequence FSLLLIGRACLGLALGGFWAM. At 129–147 the chain is on the cytoplasmic side; sequence SASLTMRLVPPRTVPKALS. Residues 148–168 form a helical membrane-spanning segment; it reads VIFGAVSIALVIAAPLGCFLG. The Periplasmic segment spans residues 169 to 175; sequence ELIGWRN. Residues 176 to 196 traverse the membrane as a helical segment; that stretch reads VFNAAAAMGVLCIFWIIKSLP. At 197-215 the chain is on the cytoplasmic side; that stretch reads SLPGEPSHQKQNTFRLLQR. The chain crosses the membrane as a helical span at residues 216–236; the sequence is PGVMAGMIAIFMSFAGQFAFF. Over 237–255 the chain is Periplasmic; that stretch reads TYIRPVYMTLAGFGVDGLT. The chain crosses the membrane as a helical span at residues 256–276; the sequence is LVLLSFGIASFVGTSLSSFIL. The Cytoplasmic portion of the chain corresponds to 277 to 281; it reads KRSVK. The helical transmembrane segment at 282 to 302 threads the bilayer; that stretch reads LALAGAPFVLALSALVLTLWG. Over 303–305 the chain is Periplasmic; the sequence is SDK. The helical transmembrane segment at 306-326 threads the bilayer; that stretch reads IVATGVAIIWGLTFALIPVGW. The Cytoplasmic segment spans residues 327 to 343; the sequence is STWITRSLADQAEKAGS. A helical transmembrane segment spans residues 344–364; it reads IQVAVIQLANTCGAAIGGYAL. Residues 365-366 lie on the Periplasmic side of the membrane; the sequence is DN. Residues 367–387 form a helical membrane-spanning segment; the sequence is IGLTSPLMLSGTLMLLTALLV. Topologically, residues 388-396 are cytoplasmic; it reads TAKVKMKKS.

This sequence belongs to the major facilitator superfamily. DHA1 family. NepI (TC 2.A.1.2.26) subfamily.

It is found in the cell inner membrane. It catalyses the reaction inosine(in) + H(+)(out) = inosine(out) + H(+)(in). The catalysed reaction is guanosine(in) + H(+)(out) = guanosine(out) + H(+)(in). Its function is as follows. Involved in the efflux of purine ribonucleosides, such as inosine and guanosine. The sequence is that of Purine ribonucleoside efflux pump NepI from Escherichia coli O157:H7.